The primary structure comprises 393 residues: Ubiquitin-like modifier-activating enzyme 5 (393 aa).

Positions 75, 96, 119, 142, and 175 each coordinate ATP. Zn(2+) is bound by residues Cys217 and Cys220. Cys241 functions as the Glycyl thioester intermediate in the catalytic mechanism. 2 residues coordinate Zn(2+): Cys294 and Cys299.

It belongs to the ubiquitin-activating E1 family. UBA5 subfamily.

Its function is as follows. E1-like enzyme which activates UFM1. The chain is Ubiquitin-like modifier-activating enzyme 5 from Bombyx mori (Silk moth).